The chain runs to 165 residues: Heme oxygenase (165 aa).

It belongs to the heme oxygenase family.

The catalysed reaction is heme b + 3 reduced [NADPH--hemoprotein reductase] + 3 O2 = biliverdin IXalpha + CO + Fe(2+) + 3 oxidized [NADPH--hemoprotein reductase] + 3 H2O + H(+). Functionally, catalyzes the opening of the heme ring to form the open-chain tetrapyrrole biliverdin IX with the release of iron and carbon monoxide (CO). This chain is Heme oxygenase (bphO), found in Xanthomonas campestris pv. campestris (strain 8004).